A 953-amino-acid chain; its full sequence is MSKKRLYEIAKELGKESKEIVQRAKELGLDVKSHSSSVEAATADKIVASFASAKKAVAGTSEAKAKPSTEPIKTEATPSKPAKDKTEQATNKPSPSPASSPKPVEEASAKAPASKQEQAQGTAAPKVTRPQSRNFKAEREARAKEQAERRKQQGQQRPQGNRNDRNDRRNNQNDRNDRNSQNRNDRRNRQEQGNQHRNQGQSQYNQQRQSFNQGPKIDFKARAAALKAEQNAEYARSSEERFKQAKANKEALREQNKRKEQAKLEDLFVEVESPKPTAKAPATPAPTAQDPAVDTRRKKQARPDKERDNFDHEEDGPRKQQKNRSSQNQVRNQKNSNWNNNKKTKKGKNNRNNNATPKPVTERKFHELPTEFEYTDGMTVAEIAKRIKREPAEIVKKLFMMGVMATQNQSLDGDTIELLMVDYGIEAKKKVEVDAADIERFFVEEGYINEDALEERPPVVTIMGHVDHGKTTLLDTLRNSRVATGEAGGITQHIGAYQIVEGGKKITFLDTPGHAAFTSMRARGASVTDITILVVAADDGVMPQTIEAINHSKAANVPIIVAINKIDKPGANPERVIGELAEHGVMSTAWGGDSEFVEISAKFNQNIDELLETVLLVAEIQELKADPTVRAIGTVIEARLDKGKGAVATLLVQQGTLNVQDPIVVGNTFGRVRAMTNDLGRRVKVAGPSTPVSITGLNETPMAGDHFAVYEDEKAARAAGEERAKRALLKQRQATHRVSLENLFDTLKAGEVKSVNVIIKADVQGSVEALAASLQKIEVEGVKVTIVHSAVGAINESDVTLAEASNAVIIGFNVRPTPQARQQAESDSVEIRLHSIIYKVIEEVEDAMKGMLDPEYQEKIIGEALIRETFKVSKVGTIGGFMVISGKVTRDSKVRVIRDGVVIYDGQLASLKHFKDDVKEVTNGREGGLMIEGYNDIQVDDTIEAYIMEEIKK.

The interval 53–368 (AKKAVAGTSE…PVTERKFHEL (316 aa)) is disordered. Composition is skewed to basic and acidic residues over residues 135 to 151 (FKAE…ERRK) and 162 to 190 (RNDR…RNRQ). Residues 191–214 (EQGNQHRNQGQSQYNQQRQSFNQG) are compositionally biased toward low complexity. The segment covering 236-266 (RSSEERFKQAKANKEALREQNKRKEQAKLED) has biased composition (basic and acidic residues). A compositionally biased stretch (low complexity) spans 274–288 (PKPTAKAPATPAPTA). A compositionally biased stretch (basic and acidic residues) spans 301–318 (ARPDKERDNFDHEEDGPR). Low complexity predominate over residues 332-341 (NQKNSNWNNN). The tr-type G domain maps to 455–622 (ERPPVVTIMG…TVLLVAEIQE (168 aa)). A G1 region spans residues 464-471 (GHVDHGKT). Residue 464 to 471 (GHVDHGKT) coordinates GTP. Residues 489–493 (GITQH) form a G2 region. The interval 510–513 (DTPG) is G3. GTP contacts are provided by residues 510–514 (DTPGH) and 564–567 (NKID). Residues 564–567 (NKID) form a G4 region. A G5 region spans residues 600 to 602 (SAK).

This sequence belongs to the TRAFAC class translation factor GTPase superfamily. Classic translation factor GTPase family. IF-2 subfamily.

It is found in the cytoplasm. One of the essential components for the initiation of protein synthesis. Protects formylmethionyl-tRNA from spontaneous hydrolysis and promotes its binding to the 30S ribosomal subunits. Also involved in the hydrolysis of GTP during the formation of the 70S ribosomal complex. The sequence is that of Translation initiation factor IF-2 from Streptococcus gordonii (strain Challis / ATCC 35105 / BCRC 15272 / CH1 / DL1 / V288).